Reading from the N-terminus, the 496-residue chain is Docking protein 3 (496 aa).

A disordered region spans residues L18–S38. In terms of domain architecture, PH spans P63 to F179. S194 carries the post-translational modification Phosphoserine. Positions E213–L317 constitute an IRS-type PTB domain. Residues R313–Q363 form a disordered region. S330 and S364 each carry phosphoserine. At Y381 the chain carries Phosphotyrosine. Residues P408–S447 are disordered. S425 is subject to Phosphoserine.

The protein belongs to the DOK family. Type A subfamily. As to quaternary structure, on tyrosine phosphorylation, interacts with CSK and INPP5D/SHIP1 via their SH2 domains. Both Tyr-381 and Tyr-398 are required for interaction with INPP5D. Only Tyr-381 is required for interaction with CSK. Binds ABL1 through the PTB domain and in a kinase-dependent manner. Does not interact with RasGAP. Post-translationally, constitutively tyrosine-phosphorylated. On IL2 stimulation, phosphorylated on C-terminal tyrosine residues possibly by Src kinases. Can also be phosphorylated by ABL1 kinase. In terms of tissue distribution, expressed in spleen.

The protein resides in the cytoplasm. The protein localises to the cell membrane. In terms of biological role, DOK proteins are enzymatically inert adaptor or scaffolding proteins. They provide a docking platform for the assembly of multimolecular signaling complexes. DOK3 is a negative regulator of JNK signaling in B-cells through interaction with INPP5D/SHIP1. May modulate ABL1 function. The polypeptide is Docking protein 3 (DOK3) (Homo sapiens (Human)).